Here is a 360-residue protein sequence, read N- to C-terminus: Biotin synthase (360 aa).

Residues 1–25 (MQHAPLNFVPDAAKVPPTPGQSPNA) are disordered. Residues 58–285 (NAVQLSTLLS…KAMVRLSAGR (228 aa)) form the Radical SAM core domain. 3 residues coordinate [4Fe-4S] cluster: Cys-73, Cys-77, and Cys-80. The [2Fe-2S] cluster site is built by Cys-117, Cys-148, Cys-208, and Arg-280. Residues 340–360 (QAEGAQHSHSSHCHIDITPAD) are disordered.

Belongs to the radical SAM superfamily. Biotin synthase family. As to quaternary structure, homodimer. It depends on [4Fe-4S] cluster as a cofactor. Requires [2Fe-2S] cluster as cofactor.

It carries out the reaction (4R,5S)-dethiobiotin + (sulfur carrier)-SH + 2 reduced [2Fe-2S]-[ferredoxin] + 2 S-adenosyl-L-methionine = (sulfur carrier)-H + biotin + 2 5'-deoxyadenosine + 2 L-methionine + 2 oxidized [2Fe-2S]-[ferredoxin]. It participates in cofactor biosynthesis; biotin biosynthesis; biotin from 7,8-diaminononanoate: step 2/2. Catalyzes the conversion of dethiobiotin (DTB) to biotin by the insertion of a sulfur atom into dethiobiotin via a radical-based mechanism. This Ralstonia nicotianae (strain ATCC BAA-1114 / GMI1000) (Ralstonia solanacearum) protein is Biotin synthase.